Consider the following 284-residue polypeptide: Thymidylate synthase (284 aa).

Position 34 (Arg34) interacts with dUMP. His64 is a binding site for (6R)-5,10-methylene-5,6,7,8-tetrahydrofolate. 139-140 serves as a coordination point for dUMP; that stretch reads RR. Cys159 serves as the catalytic Nucleophile. DUMP is bound by residues 186–189, Asn197, and 227–229; these read RSAD and HIY. Asp189 provides a ligand contact to (6R)-5,10-methylene-5,6,7,8-tetrahydrofolate. Ala283 is a (6R)-5,10-methylene-5,6,7,8-tetrahydrofolate binding site.

This sequence belongs to the thymidylate synthase family. Bacterial-type ThyA subfamily. Homodimer.

It localises to the cytoplasm. The enzyme catalyses dUMP + (6R)-5,10-methylene-5,6,7,8-tetrahydrofolate = 7,8-dihydrofolate + dTMP. It participates in pyrimidine metabolism; dTTP biosynthesis. Its function is as follows. Catalyzes the reductive methylation of 2'-deoxyuridine-5'-monophosphate (dUMP) to 2'-deoxythymidine-5'-monophosphate (dTMP) while utilizing 5,10-methylenetetrahydrofolate (mTHF) as the methyl donor and reductant in the reaction, yielding dihydrofolate (DHF) as a by-product. This enzymatic reaction provides an intracellular de novo source of dTMP, an essential precursor for DNA biosynthesis. This Polaromonas sp. (strain JS666 / ATCC BAA-500) protein is Thymidylate synthase.